The following is a 197-amino-acid chain: Protein GrpE (197 aa).

The interval 1-40 is disordered; that stretch reads MSSKEQKTPEGQAPEEIIMDQHEEIEAVEPEASAEQVDPR.

The protein belongs to the GrpE family. As to quaternary structure, homodimer.

The protein localises to the cytoplasm. Participates actively in the response to hyperosmotic and heat shock by preventing the aggregation of stress-denatured proteins, in association with DnaK and GrpE. It is the nucleotide exchange factor for DnaK and may function as a thermosensor. Unfolded proteins bind initially to DnaJ; upon interaction with the DnaJ-bound protein, DnaK hydrolyzes its bound ATP, resulting in the formation of a stable complex. GrpE releases ADP from DnaK; ATP binding to DnaK triggers the release of the substrate protein, thus completing the reaction cycle. Several rounds of ATP-dependent interactions between DnaJ, DnaK and GrpE are required for fully efficient folding. The protein is Protein GrpE of Escherichia coli (strain K12 / DH10B).